The primary structure comprises 490 residues: Dual specificity protein kinase CLK3 (490 aa).

A disordered region spans residues 1 to 138; it reads MHHCKRYRSP…SKRSSRSVED (138 aa). A Phosphotyrosine modification is found at Tyr7. 6 positions are modified to phosphoserine: Ser9, Ser49, Ser51, Ser67, Ser76, and Ser78. Basic and acidic residues-rich tracts occupy residues 26 to 56 and 63 to 76; these read YSRE…DRIP and EHRD…EERS. Residues 88–116 are compositionally biased toward basic residues; the sequence is RSRHRRRSRERGPYRTRKHAHHCHKRRTR. The segment covering 117 to 130 has biased composition (low complexity); sequence SCSSASSRSQQSSK. Ser135 is subject to Phosphoserine. The region spanning 156–472 is the Protein kinase domain; that stretch reads YEIVGNLGEG…LAEALLHPFF (317 aa). ATP contacts are provided by residues 162 to 170 and Lys186; that span reads LGEGTFGKV. Asp283 acts as the Proton acceptor in catalysis.

This sequence belongs to the protein kinase superfamily. CMGC Ser/Thr protein kinase family. Lammer subfamily. Post-translationally, autophosphorylates on all three types of residues.

The protein localises to the nucleus. It localises to the cytoplasm. The protein resides in the cytoplasmic vesicle. It is found in the secretory vesicle. Its subcellular location is the acrosome. It catalyses the reaction L-seryl-[protein] + ATP = O-phospho-L-seryl-[protein] + ADP + H(+). The catalysed reaction is L-threonyl-[protein] + ATP = O-phospho-L-threonyl-[protein] + ADP + H(+). The enzyme catalyses L-tyrosyl-[protein] + ATP = O-phospho-L-tyrosyl-[protein] + ADP + H(+). With respect to regulation, leucettine L41 inhibits its kinase activity and affects the regulation of alternative splicing mediated by phosphorylation of SR proteins. Functionally, dual specificity kinase acting on both serine/threonine and tyrosine-containing substrates. Phosphorylates serine- and arginine-rich (SR) proteins of the spliceosomal complex. May be a constituent of a network of regulatory mechanisms that enable SR proteins to control RNA splicing and can cause redistribution of SR proteins from speckles to a diffuse nucleoplasmic distribution. Phosphorylates SRSF1 and SRSF3. Regulates the alternative splicing of tissue factor (F3) pre-mRNA in endothelial cells. This Rattus norvegicus (Rat) protein is Dual specificity protein kinase CLK3 (Clk3).